The chain runs to 309 residues: NAD-dependent protein deacylase sirtuin-5B, mitochondrial (309 aa).

Residues 1–35 constitute a mitochondrion transit peptide; that stretch reads MILLPFHTRRLVSHVYCGLKPASQNKGIALEMTRP. In terms of domain architecture, Deacetylase sirtuin-type spans 36-306; the sequence is SSNLANFREA…PPALARHETE (271 aa). 57-76 is an NAD(+) binding site; that stretch reads GAGVSAESGVPTIIGAGGYW. Residues tyrosine 101 and arginine 104 each contribute to the substrate site. NAD(+) is bound at residue 139–142; that stretch reads QNID. Catalysis depends on histidine 157, which acts as the Proton acceptor. Zn(2+) contacts are provided by cysteine 165, cysteine 168, cysteine 206, and cysteine 211. NAD(+)-binding positions include 248-250, 274-276, and cysteine 292; these read GTS and NME.

This sequence belongs to the sirtuin family. Class III subfamily. Zn(2+) is required as a cofactor.

It is found in the mitochondrion. The protein localises to the cytoplasm. It localises to the cytosol. The protein resides in the nucleus. The catalysed reaction is N(6)-malonyl-L-lysyl-[protein] + NAD(+) + H2O = 2''-O-malonyl-ADP-D-ribose + nicotinamide + L-lysyl-[protein]. It catalyses the reaction N(6)-succinyl-L-lysyl-[protein] + NAD(+) + H2O = 2''-O-succinyl-ADP-D-ribose + nicotinamide + L-lysyl-[protein]. The enzyme catalyses N(6)-glutaryl-L-lysyl-[protein] + NAD(+) + H2O = 2''-O-glutaryl-ADP-D-ribose + nicotinamide + L-lysyl-[protein]. Functionally, NAD-dependent lysine demalonylase, desuccinylase and deglutarylase that specifically removes malonyl, succinyl and glutaryl groups on target proteins. Has weak NAD-dependent protein deacetylase activity; however this activity may not be physiologically relevant in vivo. This chain is NAD-dependent protein deacylase sirtuin-5B, mitochondrial (sirt5-b), found in Xenopus laevis (African clawed frog).